The chain runs to 720 residues: Neurochondrin (720 aa).

Belongs to the neurochondrin family.

The protein resides in the cytoplasm. It localises to the cytosol. The protein localises to the cell projection. It is found in the dendrite. Its subcellular location is the postsynapse. Functionally, probably involved in signal transduction, in the nervous system. Required for the spatial learning process. May also be involved in neurite outgrowth. The polypeptide is Neurochondrin (ncdn) (Xenopus laevis (African clawed frog)).